The following is an 84-amino-acid chain: uncharacterized protein (84 aa).

This is an uncharacterized protein from Rickettsia prowazekii (strain Madrid E).